Consider the following 379-residue polypeptide: Queuine tRNA-ribosyltransferase (379 aa).

D94 serves as the catalytic Proton acceptor. Substrate-binding positions include 94 to 98, D148, Q191, and G218; that span reads DSGGF. The interval 249–255 is RNA binding; that stretch reads GVGSPDS. The active-site Nucleophile is the D268. The interval 273–277 is RNA binding; important for wobble base 34 recognition; that stretch reads TRIAR. Zn(2+) contacts are provided by C306, C308, C311, and H337.

The protein belongs to the queuine tRNA-ribosyltransferase family. As to quaternary structure, homodimer. Within each dimer, one monomer is responsible for RNA recognition and catalysis, while the other monomer binds to the replacement base PreQ1. It depends on Zn(2+) as a cofactor.

It carries out the reaction 7-aminomethyl-7-carbaguanine + guanosine(34) in tRNA = 7-aminomethyl-7-carbaguanosine(34) in tRNA + guanine. It functions in the pathway tRNA modification; tRNA-queuosine biosynthesis. In terms of biological role, catalyzes the base-exchange of a guanine (G) residue with the queuine precursor 7-aminomethyl-7-deazaguanine (PreQ1) at position 34 (anticodon wobble position) in tRNAs with GU(N) anticodons (tRNA-Asp, -Asn, -His and -Tyr). Catalysis occurs through a double-displacement mechanism. The nucleophile active site attacks the C1' of nucleotide 34 to detach the guanine base from the RNA, forming a covalent enzyme-RNA intermediate. The proton acceptor active site deprotonates the incoming PreQ1, allowing a nucleophilic attack on the C1' of the ribose to form the product. After dissociation, two additional enzymatic reactions on the tRNA convert PreQ1 to queuine (Q), resulting in the hypermodified nucleoside queuosine (7-(((4,5-cis-dihydroxy-2-cyclopenten-1-yl)amino)methyl)-7-deazaguanosine). In Listeria welshimeri serovar 6b (strain ATCC 35897 / DSM 20650 / CCUG 15529 / CIP 8149 / NCTC 11857 / SLCC 5334 / V8), this protein is Queuine tRNA-ribosyltransferase.